A 313-amino-acid chain; its full sequence is Ribosomal RNA small subunit methyltransferase H (313 aa).

Residues 36–38 (GGH), D56, F80, D102, and Q109 each bind S-adenosyl-L-methionine.

The protein belongs to the methyltransferase superfamily. RsmH family.

It localises to the cytoplasm. It catalyses the reaction cytidine(1402) in 16S rRNA + S-adenosyl-L-methionine = N(4)-methylcytidine(1402) in 16S rRNA + S-adenosyl-L-homocysteine + H(+). In terms of biological role, specifically methylates the N4 position of cytidine in position 1402 (C1402) of 16S rRNA. In Actinobacillus pleuropneumoniae serotype 3 (strain JL03), this protein is Ribosomal RNA small subunit methyltransferase H.